The primary structure comprises 285 residues: Small ribosomal subunit protein uS5x (285 aa).

Over residues 1-19 the composition is skewed to basic and acidic residues; that stretch reads MAERGGERGVERGGERGDF. The interval 1-51 is disordered; that stretch reads MAERGGERGVERGGERGDFGRGFGGRGGRGDRGGRGRGGRGGRRGGRASEE. Residues 35 to 46 are compositionally biased toward basic residues; sequence RGRGGRGGRRGG. Residues 96 to 159 enclose the S5 DRBM domain; sequence LKDEVMKIMP…ILAKLSVVPV (64 aa).

Belongs to the universal ribosomal protein uS5 family. As to quaternary structure, interacts with MBD6.

Component of the ribosome, a large ribonucleoprotein complex responsible for the synthesis of proteins in the cell. The small ribosomal subunit (SSU) binds messenger RNAs (mRNAs) and translates the encoded message by selecting cognate aminoacyl-transfer RNA (tRNA) molecules. The large subunit (LSU) contains the ribosomal catalytic site termed the peptidyl transferase center (PTC), which catalyzes the formation of peptide bonds, thereby polymerizing the amino acids delivered by tRNAs into a polypeptide chain. The nascent polypeptides leave the ribosome through a tunnel in the LSU and interact with protein factors that function in enzymatic processing, targeting, and the membrane insertion of nascent chains at the exit of the ribosomal tunnel. Plays a role in the assembly and function of the 40S ribosomal subunit. Mutations in this protein affects the control of translational fidelity. Involved in nucleolar processing of pre-18S ribosomal RNA and ribosome assembly. Also involved in RNA-directed DNA methylation (RdDM). The polypeptide is Small ribosomal subunit protein uS5x (Arabidopsis thaliana (Mouse-ear cress)).